A 241-amino-acid chain; its full sequence is Chaperone protein HifB (241 aa).

Residues 1–27 (MGKTMFKKTLLFFTALFFTALCAFSAN) form the signal peptide.

The protein belongs to the periplasmic pilus chaperone family.

It is found in the periplasm. In terms of biological role, mediates assembly of pili by forming soluble multimeric complexes with pili subunits as an intermediate step in the assembly process. This protein is involved in type B pili (HifA) assembly. The protein is Chaperone protein HifB (hifB) of Haemophilus influenzae.